The primary structure comprises 215 residues: Serine acetyltransferase (215 aa).

Belongs to the transferase hexapeptide repeat family.

Its subcellular location is the cytoplasm. It carries out the reaction L-serine + acetyl-CoA = O-acetyl-L-serine + CoA. Its pathway is amino-acid biosynthesis; L-cysteine biosynthesis; L-cysteine from L-serine: step 1/2. The chain is Serine acetyltransferase (cysE) from Staphylococcus aureus (strain MRSA252).